A 66-amino-acid chain; its full sequence is Large ribosomal subunit protein bL35 (66 aa).

The protein belongs to the bacterial ribosomal protein bL35 family.

The sequence is that of Large ribosomal subunit protein bL35 from Hyphomonas neptunium (strain ATCC 15444).